The sequence spans 142 residues: Putative pre-16S rRNA nuclease (142 aa).

The protein belongs to the YqgF nuclease family.

Its subcellular location is the cytoplasm. Its function is as follows. Could be a nuclease involved in processing of the 5'-end of pre-16S rRNA. The chain is Putative pre-16S rRNA nuclease from Nitratidesulfovibrio vulgaris (strain DP4) (Desulfovibrio vulgaris).